Here is a 73-residue protein sequence, read N- to C-terminus: Ferredoxin-thioredoxin reductase, variable chain (73 aa).

Residues 43 to 46 (NGKP) are interaction with ferredoxin.

This sequence belongs to the ferredoxin thioredoxin reductase alpha subunit family. Heterodimer of subunit A (variable subunit) and subunit B (catalytic subunit). Heterodimeric FTR forms a complex with ferredoxin and thioredoxin.

In terms of biological role, variable subunit of the ferredoxin-thioredoxin reductase (FTR), which catalyzes the two-electron reduction of thioredoxins by the electrons provided by reduced ferredoxin. This is Ferredoxin-thioredoxin reductase, variable chain (ftrV) from Synechococcus sp. (strain ATCC 27144 / PCC 6301 / SAUG 1402/1) (Anacystis nidulans).